A 341-amino-acid chain; its full sequence is Phosphate acyltransferase (341 aa).

The protein belongs to the PlsX family. In terms of assembly, homodimer. Probably interacts with PlsY.

It localises to the cytoplasm. It catalyses the reaction a fatty acyl-[ACP] + phosphate = an acyl phosphate + holo-[ACP]. Its pathway is lipid metabolism; phospholipid metabolism. Catalyzes the reversible formation of acyl-phosphate (acyl-PO(4)) from acyl-[acyl-carrier-protein] (acyl-ACP). This enzyme utilizes acyl-ACP as fatty acyl donor, but not acyl-CoA. The chain is Phosphate acyltransferase from Vibrio vulnificus (strain CMCP6).